The chain runs to 206 residues: MTNSRLEKLAADLQRILGDRQIDISCALGELTLLVHSRDLPDIAEVLRDHQDLGFDTLIDLCGVDFSEYSTDTHAGYKREDRRFAVVYHLLSVKHNHRLRVRVFAEDNEFPMVDSVMPVWPSANWFEREAFDLFGIIFNNHPDLRRILTDYGFIGNPFRKDFPLSGHVEMRYDPDQKRVVYQPVTIEPREITPYVIREEQYGREEI.

It belongs to the complex I 30 kDa subunit family. NDH-1 is composed of 14 different subunits. Subunits NuoB, C, D, E, F, and G constitute the peripheral sector of the complex.

The protein resides in the cell inner membrane. The enzyme catalyses a quinone + NADH + 5 H(+)(in) = a quinol + NAD(+) + 4 H(+)(out). Functionally, NDH-1 shuttles electrons from NADH, via FMN and iron-sulfur (Fe-S) centers, to quinones in the respiratory chain. The immediate electron acceptor for the enzyme in this species is believed to be ubiquinone. Couples the redox reaction to proton translocation (for every two electrons transferred, four hydrogen ions are translocated across the cytoplasmic membrane), and thus conserves the redox energy in a proton gradient. This is NADH-quinone oxidoreductase subunit C from Nitrosomonas europaea (strain ATCC 19718 / CIP 103999 / KCTC 2705 / NBRC 14298).